Consider the following 260-residue polypeptide: Tropinone reductase homolog At2g29330 (260 aa).

Residue 13 to 37 coordinates NADP(+); the sequence is LVTGGASGIGHAIVEELAGFGAKIH. S146 is a substrate binding site. Y159 acts as the Proton acceptor in catalysis.

This sequence belongs to the short-chain dehydrogenases/reductases (SDR) family. SDR65C subfamily.

Functionally, reductase active only on small flexible lipophilic carbonyls. No activity with cyclic monoterpenes, tropinone, nitrogen-containing tropinone analogs, tropine or pseudotropine as substrate. The polypeptide is Tropinone reductase homolog At2g29330 (Arabidopsis thaliana (Mouse-ear cress)).